The sequence spans 402 residues: Bacteriochlorophyllide c C-7(1)-hydroxylase (402 aa).

The region spanning 104–359 is the Radical SAM core domain; sequence VIGMNQDIIN…IKYQDRFDMP (256 aa). 3 residues coordinate [4Fe-4S] cluster: Cys-120, Cys-129, and Cys-132.

The protein belongs to the radical SAM superfamily. [4Fe-4S] cluster is required as a cofactor.

It carries out the reaction a bacteriochlorophyllide c + 2 S-adenosyl-L-methionine + H2O = a bacteriochlorophyllide e + 2 5'-deoxyadenosine + 2 L-methionine + 2 H(+). The enzyme catalyses a bacteriochlorophyllide d + 2 S-adenosyl-L-methionine + H2O = a bacteriochlorophyllide f + 2 5'-deoxyadenosine + 2 L-methionine + 2 H(+). The protein operates within porphyrin-containing compound metabolism; bacteriochlorophyll biosynthesis. Its function is as follows. Involved in the biosynthesis of bacteriochlorophyll e (BChl e). Catalyzes two consecutive hydroxylation reactions of the C-7 methyl group of bacteriochlorophyllide c (BChlide c) to form a geminal diol intermediate that spontaneously dehydrates to produce the formyl group of bacteriochlorophyllide e (BChlide e). Also able to catalyze the same reaction for bacteriochlorophyllide d (BChlide d) to give rise to bacteriochlorophyllide f (BChlide f). The chain is Bacteriochlorophyllide c C-7(1)-hydroxylase from Chlorobaculum limnaeum.